We begin with the raw amino-acid sequence, 40 residues long: Photosystem II reaction center protein X (40 aa).

The chain crosses the membrane as a helical span at residues Trp10–Ile30.

This sequence belongs to the PsbX family. Type 1 subfamily. As to quaternary structure, PSII is composed of 1 copy each of membrane proteins PsbA, PsbB, PsbC, PsbD, PsbE, PsbF, PsbH, PsbI, PsbJ, PsbK, PsbL, PsbM, PsbT, PsbX, PsbY, PsbZ, Psb30/Ycf12, peripheral proteins PsbO, CyanoQ (PsbQ), PsbU, PsbV and a large number of cofactors. It forms dimeric complexes.

Its subcellular location is the cellular thylakoid membrane. Functionally, involved in the binding and/or turnover of quinones at the Q(B) site of photosystem II (PSII). PSII is a light-driven water plastoquinone oxidoreductase, using light energy to abstract electrons from H(2)O, generating a proton gradient subsequently used for ATP formation. The sequence is that of Photosystem II reaction center protein X from Crocosphaera subtropica (strain ATCC 51142 / BH68) (Cyanothece sp. (strain ATCC 51142)).